Here is a 365-residue protein sequence, read N- to C-terminus: S-adenosylmethionine:tRNA ribosyltransferase-isomerase (365 aa).

The protein belongs to the QueA family. As to quaternary structure, monomer.

The protein resides in the cytoplasm. It carries out the reaction 7-aminomethyl-7-carbaguanosine(34) in tRNA + S-adenosyl-L-methionine = epoxyqueuosine(34) in tRNA + adenine + L-methionine + 2 H(+). It functions in the pathway tRNA modification; tRNA-queuosine biosynthesis. Transfers and isomerizes the ribose moiety from AdoMet to the 7-aminomethyl group of 7-deazaguanine (preQ1-tRNA) to give epoxyqueuosine (oQ-tRNA). The polypeptide is S-adenosylmethionine:tRNA ribosyltransferase-isomerase (Prochlorococcus marinus (strain NATL2A)).